We begin with the raw amino-acid sequence, 315 residues long: Tyrosine recombinase XerC (315 aa).

Positions P14–Q105 constitute a Core-binding (CB) domain. The Tyr recombinase domain maps to S126 to D309. Residues R169, K193, H261, R264, and H287 contribute to the active site. Y296 serves as the catalytic O-(3'-phospho-DNA)-tyrosine intermediate.

It belongs to the 'phage' integrase family. XerC subfamily. In terms of assembly, forms a cyclic heterotetrameric complex composed of two molecules of XerC and two molecules of XerD.

The protein localises to the cytoplasm. Site-specific tyrosine recombinase, which acts by catalyzing the cutting and rejoining of the recombining DNA molecules. The XerC-XerD complex is essential to convert dimers of the bacterial chromosome into monomers to permit their segregation at cell division. It also contributes to the segregational stability of plasmids. The protein is Tyrosine recombinase XerC of Agrobacterium fabrum (strain C58 / ATCC 33970) (Agrobacterium tumefaciens (strain C58)).